A 519-amino-acid chain; its full sequence is Protein twist (519 aa).

4 disordered regions span residues 53–77 (MQQQ…QQQY), 131–156 (NFEQ…VATA), 301–321 (YEAY…SDRD), and 368–389 (FRKP…DEFS). Composition is skewed to low complexity over residues 54–76 (QQQQ…QQQQ) and 134–146 (QQQQ…QQQQ). A compositionally biased stretch (polar residues) spans 308–317 (NSLNGSTYSS). The span at 368-379 (FRKPRRRLKRKP) shows a compositional bias: basic residues. Residues 390-441 (NQRVMANVRERQRTQSLNDAFKALQQIIPTLPSDKLSKIQTLKLATRYIDFL) enclose the bHLH domain.

In terms of assembly, efficient DNA binding requires dimerization with another bHLH protein. Homodimer.

It is found in the nucleus. In terms of biological role, involved in the establishment and dorsoventral patterning of germ layers in the embryo. In Drosophila virilis (Fruit fly), this protein is Protein twist.